Here is a 248-residue protein sequence, read N- to C-terminus: ATP synthase subunit a, chloroplastic (248 aa).

A run of 4 helical transmembrane segments spans residues 96–116 (VPFIGTMFLFIFASNWSGALL), 135–155 (INTTVALALLTSVAYFYAGLY), 200–220 (LVVAVLVSLVPLIVPVPMMLL), and 221–241 (GLFTSGIQALIFATLAAAYIG).

This sequence belongs to the ATPase A chain family. As to quaternary structure, F-type ATPases have 2 components, CF(1) - the catalytic core - and CF(0) - the membrane proton channel. CF(1) has five subunits: alpha(3), beta(3), gamma(1), delta(1), epsilon(1). CF(0) has four main subunits: a, b, b' and c.

It is found in the plastid. Its subcellular location is the chloroplast thylakoid membrane. Functionally, key component of the proton channel; it plays a direct role in the translocation of protons across the membrane. The polypeptide is ATP synthase subunit a, chloroplastic (Adiantum capillus-veneris (Maidenhair fern)).